A 314-amino-acid chain; its full sequence is Ribosomal protein L11 methyltransferase (314 aa).

Positions 161, 182, 204, and 248 each coordinate S-adenosyl-L-methionine.

The protein belongs to the methyltransferase superfamily. PrmA family.

The protein resides in the cytoplasm. It catalyses the reaction L-lysyl-[protein] + 3 S-adenosyl-L-methionine = N(6),N(6),N(6)-trimethyl-L-lysyl-[protein] + 3 S-adenosyl-L-homocysteine + 3 H(+). Functionally, methylates ribosomal protein L11. The chain is Ribosomal protein L11 methyltransferase from Listeria monocytogenes serotype 1/2a (strain 10403S).